Reading from the N-terminus, the 207-residue chain is Large ribosomal subunit protein bL25 (207 aa).

The protein belongs to the bacterial ribosomal protein bL25 family. CTC subfamily. As to quaternary structure, part of the 50S ribosomal subunit; part of the 5S rRNA/L5/L18/L25 subcomplex. Contacts the 5S rRNA. Binds to the 5S rRNA independently of L5 and L18.

Functionally, this is one of the proteins that binds to the 5S RNA in the ribosome where it forms part of the central protuberance. The sequence is that of Large ribosomal subunit protein bL25 from Brucella canis (strain ATCC 23365 / NCTC 10854 / RM-666).